A 186-amino-acid polypeptide reads, in one-letter code: uncharacterized protein (186 aa).

An N-terminal signal peptide occupies residues 1–28; it reads MSVKPAALFRISAALAVAGLGASLIASA.

This is an uncharacterized protein from Rhizobium meliloti (strain 1021) (Ensifer meliloti).